Consider the following 1356-residue polypeptide: Kinesin-like protein KIF24 (1356 aa).

An SAM domain is found at 1-64; that stretch reads MASWLYECLC…FQLIKIIKIM (64 aa). The interval 93-119 is disordered; sequence GPRRQLHFDSPSASKDKMANNETGSLS. Ser-102 is modified (phosphoserine). The Kinesin motor domain occupies 218-541; the sequence is KIRVCVRKRP…LRYADRVKEL (324 aa). An ATP-binding site is contributed by 308-315; the sequence is GQTGAGKT. Ser-473 is modified (phosphoserine). The tract at residues 473–702 is interaction with MPHOSPH9; the sequence is SLLALKECIR…PTRGKKVQPV (230 aa). The span at 552-571 shows a compositional bias: polar residues; sequence TSQNQTSANASPKRIQSSPV. Disordered stretches follow at residues 552-581, 597-664, 788-840, 897-947, and 964-998; these read TSQNQTSANASPKRIQSSPVTLPGDKCSPK, PTKV…LCSE, EGRL…STAL, RGAL…HQKP, and VPEQAEGSLSSPSPENGLSFPLSHVAVSGSPDQRD. Residue Ser-579 is modified to Phosphoserine. At Thr-615 the chain carries Phosphothreonine; by NEK2. Position 616 is a phosphoserine; by NEK2 (Ser-616). 3 positions are modified to phosphoserine: Ser-640, Ser-817, and Ser-820. Positions 640-653 are enriched in basic residues; sequence SPRKGTTRSGHSIK. The span at 810–821 shows a compositional bias: acidic residues; that stretch reads QAEDLDDSDFSE. Residues 830–840 are compositionally biased toward polar residues; it reads QPAMKQGSTAL. The span at 970–979 shows a compositional bias: polar residues; it reads GSLSSPSPEN. Ser-1008 carries the phosphoserine modification. Residues 1109 to 1140 are disordered; it reads LSSSPPDNRPSGDLPALSPSPIHQHSPDKLPG.

Belongs to the TRAFAC class myosin-kinesin ATPase superfamily. Kinesin family. As to quaternary structure, interacts with CCP110, CEP97, TALPID3. Interacts with MPHOSPH9. In terms of tissue distribution, expressed in brain, spinal cord, and small intestine.

The protein localises to the cytoplasm. The protein resides in the cytoskeleton. It localises to the microtubule organizing center. Its subcellular location is the centrosome. It is found in the centriole. Functionally, microtubule-dependent motor protein that acts as a negative regulator of ciliogenesis by mediating recruitment of CCP110 to mother centriole in cycling cells, leading to restrict nucleation of cilia at centrioles. Mediates depolymerization of microtubules of centriolar origin, possibly to suppress aberrant cilia formation. Following activation by NEK2 involved in disassembly of primary cilium during G2/M phase but does not disassemble fully formed ciliary axonemes. As cilium assembly and disassembly is proposed to coexist in a dynamic equilibrium may suppress nascent cilium assembly and, potentially, ciliar re-assembly in cells that have already disassembled their cilia ensuring the completion of cilium removal in the later stages of the cell cycle. Plays an important role in recruiting MPHOSPH9, a negative regulator of cilia formation to the distal end of mother centriole. In Mus musculus (Mouse), this protein is Kinesin-like protein KIF24 (Kif24).